The chain runs to 132 residues: Agouti-signaling protein (132 aa).

The first 22 residues, 1-22 (MDVTRLLLATLLVFLCFFTAYS), serve as a signal peptide directing secretion. N39 carries N-linked (GlcNAc...) asparagine glycosylation. Positions 61–79 (EISRKEAEKKRSSKKEASM) are enriched in basic and acidic residues. A disordered region spans residues 61 to 87 (EISRKEAEKKRSSKKEASMKKVARPRT). Intrachain disulfides connect C93-C108, C100-C114, C107-C125, C111-C132, and C116-C123. Residues 93–132 (CVATRDSCKPPAPACCDPCASCQCRFFRSACSCRVLSLNC) form the Agouti domain.

The protein localises to the secreted. Functionally, involved in the regulation of melanogenesis. The binding of ASP to MC1R precludes alpha-MSH initiated signaling and thus blocks production of cAMP, leading to a down-regulation of eumelanogenesis (brown/black pigment) and thus increasing synthesis of pheomelanin (yellow/red pigment). The protein is Agouti-signaling protein (ASIP) of Macaca fascicularis (Crab-eating macaque).